We begin with the raw amino-acid sequence, 24 residues long: Acetylcholine receptor subunit alpha (24 aa).

It belongs to the ligand-gated ion channel (TC 1.A.9) family. Acetylcholine receptor (TC 1.A.9.1) subfamily. Alpha-1/CHRNA1 sub-subfamily. One of the alpha chains that assemble within the acetylcholine receptor, a pentamer of two alpha chains, a beta, a delta, and a gamma or epsilon chains.

Its subcellular location is the postsynaptic cell membrane. The protein localises to the cell membrane. It carries out the reaction K(+)(in) = K(+)(out). It catalyses the reaction Na(+)(in) = Na(+)(out). Functionally, upon acetylcholine binding, the AChR responds by an extensive change in conformation that affects all subunits and leads to opening of an ion-conducting channel across the plasma membrane. The protein is Acetylcholine receptor subunit alpha (chrna1) of Electrophorus electricus (Electric eel).